We begin with the raw amino-acid sequence, 250 residues long: 26S proteasome non-ATPase regulatory subunit 8 (250 aa).

Residues 63 to 233 form the PCI domain; that stretch reads HDFETFDDYI…QEKPVNLDTV (171 aa).

Belongs to the proteasome subunit S14 family.

Its function is as follows. Acts as a regulatory subunit of the 26S proteasome which is involved in the ATP-dependent degradation of ubiquitinated proteins. This Caenorhabditis elegans protein is 26S proteasome non-ATPase regulatory subunit 8.